The chain runs to 718 residues: Centromere/kinetochore protein zw10 (718 aa).

It belongs to the ZW10 family.

The protein localises to the cytoplasm. Its subcellular location is the nucleus. It is found in the chromosome. The protein resides in the centromere. It localises to the kinetochore. Required for accurate chromosome segregation. This is Centromere/kinetochore protein zw10 (mit(1)15) from Drosophila pseudoobscura pseudoobscura (Fruit fly).